The chain runs to 281 residues: NADPH-dependent 7-cyano-7-deazaguanine reductase (281 aa).

87-89 contributes to the substrate binding site; the sequence is IES. 89–90 is an NADPH binding site; that stretch reads SK. C188 functions as the Thioimide intermediate in the catalytic mechanism. D195 serves as the catalytic Proton donor. Substrate is bound at residue 227-228; the sequence is HE. 256-257 serves as a coordination point for NADPH; that stretch reads RG. The segment at 261 to 281 is disordered; that stretch reads INPYRSTEQDKPAHNNRMARQ.

The protein belongs to the GTP cyclohydrolase I family. QueF type 2 subfamily. As to quaternary structure, homodimer.

It is found in the cytoplasm. It catalyses the reaction 7-aminomethyl-7-carbaguanine + 2 NADP(+) = 7-cyano-7-deazaguanine + 2 NADPH + 3 H(+). It participates in tRNA modification; tRNA-queuosine biosynthesis. Functionally, catalyzes the NADPH-dependent reduction of 7-cyano-7-deazaguanine (preQ0) to 7-aminomethyl-7-deazaguanine (preQ1). This is NADPH-dependent 7-cyano-7-deazaguanine reductase from Vibrio campbellii (strain ATCC BAA-1116).